The primary structure comprises 236 residues: Small ribosomal subunit protein uS2c (236 aa).

This sequence belongs to the universal ribosomal protein uS2 family.

It is found in the plastid. The protein localises to the chloroplast. The sequence is that of Small ribosomal subunit protein uS2c (rps2) from Panax ginseng (Korean ginseng).